We begin with the raw amino-acid sequence, 210 residues long: Phosphoheptose isomerase (210 aa).

Positions 38 to 202 (IAACLARGGK…ENVAALAPYL (165 aa)) constitute an SIS domain. Substrate is bound at residue 53–55 (NGG). The Zn(2+) site is built by His62 and Glu66. Substrate contacts are provided by residues Glu66, 95-96 (ND), 121-123 (STS), Ser126, and Gln173. Positions 173 and 181 each coordinate Zn(2+).

The protein belongs to the SIS family. GmhA subfamily. In terms of assembly, homotetramer. It depends on Zn(2+) as a cofactor.

It is found in the cytoplasm. It carries out the reaction 2 D-sedoheptulose 7-phosphate = D-glycero-alpha-D-manno-heptose 7-phosphate + D-glycero-beta-D-manno-heptose 7-phosphate. It participates in carbohydrate biosynthesis; D-glycero-D-manno-heptose 7-phosphate biosynthesis; D-glycero-alpha-D-manno-heptose 7-phosphate and D-glycero-beta-D-manno-heptose 7-phosphate from sedoheptulose 7-phosphate: step 1/1. Functionally, catalyzes the isomerization of sedoheptulose 7-phosphate in D-glycero-D-manno-heptose 7-phosphate. In Desulfovibrio desulfuricans (strain ATCC 27774 / DSM 6949 / MB), this protein is Phosphoheptose isomerase.